The following is a 310-amino-acid chain: Pantothenate kinase (310 aa).

95 to 102 is a binding site for ATP; it reads GSVAVGKS.

It belongs to the prokaryotic pantothenate kinase family.

Its subcellular location is the cytoplasm. The enzyme catalyses (R)-pantothenate + ATP = (R)-4'-phosphopantothenate + ADP + H(+). Its pathway is cofactor biosynthesis; coenzyme A biosynthesis; CoA from (R)-pantothenate: step 1/5. The protein is Pantothenate kinase of Rhodococcus opacus (strain B4).